Consider the following 256-residue polypeptide: Imidazole glycerol phosphate synthase subunit HisF (256 aa).

Residues D13 and D132 contribute to the active site.

Belongs to the HisA/HisF family. Heterodimer of HisH and HisF.

It localises to the cytoplasm. It carries out the reaction 5-[(5-phospho-1-deoxy-D-ribulos-1-ylimino)methylamino]-1-(5-phospho-beta-D-ribosyl)imidazole-4-carboxamide + L-glutamine = D-erythro-1-(imidazol-4-yl)glycerol 3-phosphate + 5-amino-1-(5-phospho-beta-D-ribosyl)imidazole-4-carboxamide + L-glutamate + H(+). It participates in amino-acid biosynthesis; L-histidine biosynthesis; L-histidine from 5-phospho-alpha-D-ribose 1-diphosphate: step 5/9. IGPS catalyzes the conversion of PRFAR and glutamine to IGP, AICAR and glutamate. The HisF subunit catalyzes the cyclization activity that produces IGP and AICAR from PRFAR using the ammonia provided by the HisH subunit. The chain is Imidazole glycerol phosphate synthase subunit HisF from Leptospira interrogans serogroup Icterohaemorrhagiae serovar copenhageni (strain Fiocruz L1-130).